The primary structure comprises 437 residues: MASVAVDPQPSVVTRVVNLPLVSSTYDLMSSAYLSTKDQYPYLKSVCEMAENGVKTITSVAMTSALPIIQKLEPQIAVANTYACKGLDRIEERLPILNQPSTQIVANAKGAVTGAKDAVTTTVTGAKDSVASTITGVMDKTKGAVTGSVEKTKSVVSGSINTVLGSRMMQLVSSGVENALTKSELLVEQYLPLTEEELEKEAKKVEGFDLVQKPSYYVRLGSLSTKLHSRAYQQALSRVKEAKQKSQQTISQLHSTVHLIEFARKNVYSANQKIQDAQDKLYLSWVEWKRSIGYDDTDESHCAEHIESRTLAIARNLTQQLQTTCHTLLSNIQGVPQNIQDQAKHMGVMAGDIYSVFRNAASFKEVSDSLLTSSKGQLQKMKESLDDVMDYLVNNTPLNWLVGPFYPQLTESQNAQDQGAEMDKSSQETQRSEHKTH.

The residue at position 2 (A2) is an N-acetylalanine. Phosphoserine is present on S215. Y232 carries the phosphotyrosine modification. Residues S412–H437 form a disordered region. The span at E421–H437 shows a compositional bias: basic and acidic residues.

The protein belongs to the perilipin family. As to quaternary structure, interacts with IRGC. In terms of processing, acylated; primarily with C14, C16 and C18 fatty acids. Phosphorylation at Tyr-232 by isoform 1 of CHKA (CHKalpha2) promotes dissociation from lipid droplets: dissociation is followed by recruitment of autophagosome machinery to lipid droplets and subsequent lipid droplet lipolysis. Post-translationally, polyubiquitination of Nt-acetylatable A-PLIN2 by MARCHF6 lead to degradation by 26S proteasomes. As to expression, milk lipid globules.

It is found in the membrane. Its subcellular location is the lipid droplet. Structural component of lipid droplets, which is required for the formation and maintenance of lipid storage droplets. This chain is Perilipin-2, found in Homo sapiens (Human).